The sequence spans 478 residues: Cytochrome c-552 (478 aa).

The first 26 residues, Met1–Ala26, serve as a signal peptide directing secretion. A heme c-binding site is contributed by His94. 3 residues coordinate heme: Cys122, Cys125, and Lys126. Heme c contacts are provided by Cys160, Cys163, His164, Cys209, Cys212, and His213. Ca(2+)-binding residues include Glu215, Tyr216, Lys261, and Gln263. Residue Tyr216 participates in substrate binding. His264 is a binding site for substrate. Positions 275, 282, 285, 286, 301, 314, 317, 318, and 393 each coordinate heme c.

The protein belongs to the cytochrome c-552 family. The cofactor is Ca(2+). Requires heme c as cofactor.

It is found in the periplasm. It carries out the reaction 6 Fe(III)-[cytochrome c] + NH4(+) + 2 H2O = 6 Fe(II)-[cytochrome c] + nitrite + 8 H(+). Its pathway is nitrogen metabolism; nitrate reduction (assimilation). Functionally, catalyzes the reduction of nitrite to ammonia, consuming six electrons in the process. In Salmonella gallinarum (strain 287/91 / NCTC 13346), this protein is Cytochrome c-552.